Here is a 328-residue protein sequence, read N- to C-terminus: MSNTKHIHKGLQERLLDLLLIALIVYMTLKGGTSGACAACKYQRRRCAADCPLAPYFPAEQPKLFQNVHRLFGVRSIVKILEKLDETQKPEAMKSIIFQSYVRDRSPVHGCLGVTQQLQYMIWFAEEELKAVNSQLQLYRSQPQNGQNQNQNHNHNQMIHELGSDHNKQQEDVTSQQLDLGMGLNVNNNQSNVVTPFFSSLLPVSETQQPQMSYTYSCSEVNNNGYSPPAYNTDSGKEILTNNNNVWGDQNRFLYNNNNGGGYSNQNESCHEMKSNGVMAIQSQLVNLQMVSNHQRVEEEEADHEYDELHQFLDIIDDRQSFGDSKEA.

Positions 35–136 (GACAACKYQR…EELKAVNSQL (102 aa)) constitute an LOB domain.

Belongs to the LOB domain-containing protein family.

The protein is LOB domain-containing protein 27 (LBD27) of Arabidopsis thaliana (Mouse-ear cress).